The sequence spans 216 residues: UPF0193 protein EVG1 homolog (216 aa).

This sequence belongs to the UPF0193 (EVG1) family.

This chain is UPF0193 protein EVG1 homolog, found in Mus musculus (Mouse).